The sequence spans 370 residues: Pyrimidine monooxygenase RutA (370 aa).

FMN-binding positions include 49–50, asparagine 115, glutamate 124, 140–141, and serine 190; these read IK and RY.

The protein belongs to the NtaA/SnaA/DszA monooxygenase family. RutA subfamily.

It carries out the reaction uracil + FMNH2 + NADH + O2 = (Z)-3-ureidoacrylate + FMN + NAD(+) + H2O + H(+). It catalyses the reaction thymine + FMNH2 + NADH + O2 = (Z)-2-methylureidoacrylate + FMN + NAD(+) + H2O + H(+). Its function is as follows. Catalyzes the pyrimidine ring opening between N-3 and C-4 by an unusual flavin hydroperoxide-catalyzed mechanism, adding oxygen atoms in the process to yield ureidoacrylate peracid, that immediately reacts with FMN forming ureidoacrylate and FMN-N(5)-oxide. The FMN-N(5)-oxide reacts spontaneously with NADH to produce FMN. Requires the flavin reductase RutF to regenerate FMN in vivo. The polypeptide is Pyrimidine monooxygenase RutA (Variovorax paradoxus (strain S110)).